The primary structure comprises 249 residues: Coproheme decarboxylase (249 aa).

Fe-coproporphyrin III is bound by residues Arg-131, 145 to 149, His-172, and Gln-185; that span reads YPMDK. Residue Tyr-145 is part of the active site.

It belongs to the ChdC family. Type 1 subfamily. The cofactor is Fe-coproporphyrin III.

It catalyses the reaction Fe-coproporphyrin III + 2 H2O2 + 2 H(+) = heme b + 2 CO2 + 4 H2O. The enzyme catalyses Fe-coproporphyrin III + H2O2 + H(+) = harderoheme III + CO2 + 2 H2O. It carries out the reaction harderoheme III + H2O2 + H(+) = heme b + CO2 + 2 H2O. It participates in porphyrin-containing compound metabolism; protoheme biosynthesis. Involved in coproporphyrin-dependent heme b biosynthesis. Catalyzes the decarboxylation of Fe-coproporphyrin III (coproheme) to heme b (protoheme IX), the last step of the pathway. The reaction occurs in a stepwise manner with a three-propionate intermediate. The chain is Coproheme decarboxylase from Staphylococcus haemolyticus (strain JCSC1435).